A 251-amino-acid polypeptide reads, in one-letter code: GTP cyclohydrolase 1 type 2 homolog (251 aa).

Residues histidine 62, histidine 63, aspartate 103, histidine 215, and glutamate 219 each contribute to the a divalent metal cation site.

Belongs to the GTP cyclohydrolase I type 2/NIF3 family. In terms of assembly, homohexamer.

The polypeptide is GTP cyclohydrolase 1 type 2 homolog (Mycoplasmopsis pulmonis (strain UAB CTIP) (Mycoplasma pulmonis)).